The sequence spans 387 residues: MRLSILLGLLPLAPRPPAVDAVEQRSEPAPLIEAQGEMIADKYIVKLKEGSALASLDAAMEKLSGKADHVYKNIFKGFAASLDEKMVEVLRAHPDVEYIEQDAIVNINAEQRNAPWGLARISSTSPGTSTYRYDDSAGQGTCVYVIDTGVEASHPEFEGRAQMVKTYYASSRDGNGHGTHCAGTIGSRTYGVAKKTQIFGVKVLNDQGSGQYSTIISGMDFVANDYRNRNCPNGVVASMSIGGGYSSSVNSAAANLQQSGVMVAVAAGNNNADARNYSPASESSICTVGATDRYDRRSSFSNYGSVLDIFAPGTDILSTWIGGSTRSISGTSMATPHVAGLAAYLMTLGRATASNACRYIAQTANQGDLSNISFGTVNLLAYNNYQG.

A signal peptide spans 1-21 (MRLSILLGLLPLAPRPPAVDA). The propeptide occupies 22–108 (VEQRSEPAPL…IEQDAIVNIN (87 aa)). Residues 42 to 107 (KYIVKLKEGS…YIEQDAIVNI (66 aa)) enclose the Inhibitor I9 domain. The region spanning 115–387 (PWGLARISST…NLLAYNNYQG (273 aa)) is the Peptidase S8 domain. T124 serves as a coordination point for Ca(2+). Intrachain disulfides connect C142/C231 and C286/C357. Active-site charge relay system residues include D147 and H177. D308 is a binding site for Ca(2+). S332 serves as the catalytic Charge relay system. Residue D368 coordinates Ca(2+).

This sequence belongs to the peptidase S8 family. The cofactor is Ca(2+).

In terms of biological role, serine proteinase. The protein is Proteinase R (PROR) of Parengyodontium album (Tritirachium album).